Reading from the N-terminus, the 454-residue chain is Bifunctional protein GlmU (454 aa).

The pyrophosphorylase stretch occupies residues 1–226 (MSLNVVILAA…PIETEGANNR (226 aa)). Residues 8 to 11 (LAAG), Lys-22, Gln-73, 78 to 79 (GT), 100 to 102 (YGD), Gly-137, Glu-151, Asn-166, and Asn-224 contribute to the UDP-N-acetyl-alpha-D-glucosamine site. Mg(2+) is bound at residue Asp-102. Asn-224 contacts Mg(2+). A linker region spans residues 227–247 (VQLAALERAYQARRAEELMLA). Positions 248-454 (GANLRDPARI…GWQRPVKKPK (207 aa)) are N-acetyltransferase. Residues Arg-330 and Lys-348 each contribute to the UDP-N-acetyl-alpha-D-glucosamine site. The active-site Proton acceptor is the His-360. The UDP-N-acetyl-alpha-D-glucosamine site is built by Tyr-363 and Asn-374. Acetyl-CoA is bound by residues Ala-377, 383–384 (NY), Ser-402, Ala-420, and Arg-437.

In the N-terminal section; belongs to the N-acetylglucosamine-1-phosphate uridyltransferase family. This sequence in the C-terminal section; belongs to the transferase hexapeptide repeat family. Homotrimer. The cofactor is Mg(2+).

The protein localises to the cytoplasm. It carries out the reaction alpha-D-glucosamine 1-phosphate + acetyl-CoA = N-acetyl-alpha-D-glucosamine 1-phosphate + CoA + H(+). The catalysed reaction is N-acetyl-alpha-D-glucosamine 1-phosphate + UTP + H(+) = UDP-N-acetyl-alpha-D-glucosamine + diphosphate. It functions in the pathway nucleotide-sugar biosynthesis; UDP-N-acetyl-alpha-D-glucosamine biosynthesis; N-acetyl-alpha-D-glucosamine 1-phosphate from alpha-D-glucosamine 6-phosphate (route II): step 2/2. Its pathway is nucleotide-sugar biosynthesis; UDP-N-acetyl-alpha-D-glucosamine biosynthesis; UDP-N-acetyl-alpha-D-glucosamine from N-acetyl-alpha-D-glucosamine 1-phosphate: step 1/1. The protein operates within bacterial outer membrane biogenesis; LPS lipid A biosynthesis. Its function is as follows. Catalyzes the last two sequential reactions in the de novo biosynthetic pathway for UDP-N-acetylglucosamine (UDP-GlcNAc). The C-terminal domain catalyzes the transfer of acetyl group from acetyl coenzyme A to glucosamine-1-phosphate (GlcN-1-P) to produce N-acetylglucosamine-1-phosphate (GlcNAc-1-P), which is converted into UDP-GlcNAc by the transfer of uridine 5-monophosphate (from uridine 5-triphosphate), a reaction catalyzed by the N-terminal domain. The sequence is that of Bifunctional protein GlmU from Shewanella amazonensis (strain ATCC BAA-1098 / SB2B).